Here is a 160-residue protein sequence, read N- to C-terminus: Transcription elongation factor GreA (160 aa).

Residues Met-1–Ile-71 are a coiled coil.

The protein belongs to the GreA/GreB family.

Its function is as follows. Necessary for efficient RNA polymerase transcription elongation past template-encoded arresting sites. The arresting sites in DNA have the property of trapping a certain fraction of elongating RNA polymerases that pass through, resulting in locked ternary complexes. Cleavage of the nascent transcript by cleavage factors such as GreA or GreB allows the resumption of elongation from the new 3'terminus. GreA releases sequences of 2 to 3 nucleotides. In Streptococcus pyogenes serotype M3 (strain ATCC BAA-595 / MGAS315), this protein is Transcription elongation factor GreA.